Consider the following 310-residue polypeptide: Conjugation stage-specific protein (310 aa).

This sequence belongs to the archaeal Rpo3/eukaryotic RPB3 RNA polymerase subunit family.

The protein resides in the nucleus. In terms of biological role, may be a stage-specific RNA polymerase subunit. The chain is Conjugation stage-specific protein (CNJC) from Tetrahymena thermophila.